We begin with the raw amino-acid sequence, 471 residues long: Putative multidrug resistance protein MdtD (471 aa).

Residues 1–11 (MTDLPDSTRWQ) lie on the Periplasmic side of the membrane. Residues 12–32 (LWIVAFGFFMQSLDTTIVNTA) form a helical membrane-spanning segment. Over 33–48 (LPSMAQSLGESPLHMH) the chain is Cytoplasmic. Residues 49-69 (MVIVSYVLTVAVMLPASGWLA) form a helical membrane-spanning segment. Residues 70-76 (DKVGVRN) are Periplasmic-facing. A helical transmembrane segment spans residues 77 to 97 (IFFTAIVLFTLGSLFCALSGT). The Cytoplasmic portion of the chain corresponds to 98-101 (LNEL). A helical transmembrane segment spans residues 102 to 124 (LLARALQGVGGAMMVPVGRLTVM). Residues 125–137 (KIVPREQYMAAMT) lie on the Periplasmic side of the membrane. A helical transmembrane segment spans residues 138-158 (FVTLPGQVGPLLGPALGGLLV). At 159 to 164 (EYASWH) the chain is on the cytoplasmic side. The helical transmembrane segment at 165–185 (WIFLINIPVGIIGAIATLMLM) threads the bilayer. At 186–196 (PNYTMQTRRFD) the chain is on the periplasmic side. A helical membrane pass occupies residues 197–217 (LSGFLLLAVGMAVLTLALDGS). Residues 218–224 (KGTGLSP) lie on the Cytoplasmic side of the membrane. Residues 225–245 (LTIAGLVAVGVVALVLYLLHA) traverse the membrane as a helical segment. Topologically, residues 246–262 (RNNNRALFSLKLFRTRT) are periplasmic. A helical transmembrane segment spans residues 263–283 (FSLGLAGSFAGRIGSGMLPFM). At 284 to 285 (TP) the chain is on the cytoplasmic side. A helical transmembrane segment spans residues 286 to 306 (VFLQIGLGFSPFHAGLMMIPM). The Periplasmic portion of the chain corresponds to 307-341 (VLGSMGMKRIVVQVVNCFGYRRVLVATTLGLSLVT). Residues 342 to 362 (LLFMTTALLGWYYVLPFVLFL) form a helical membrane-spanning segment. Residues 363-395 (QGMVNSTRFSSMNTLTLKDLPDNLASSGNSLLS) lie on the Cytoplasmic side of the membrane. The chain crosses the membrane as a helical span at residues 396–416 (MIMQLSMSIGVTIAGLLLGLF). The Periplasmic portion of the chain corresponds to 417-430 (GSQHVSVDSGTTQT). Residues 431 to 451 (VFMYTWLSMALIIALPAFIFA) traverse the membrane as a helical segment. Residues 452-471 (RVPNDTHQNVAISRRKRSAQ) are Cytoplasmic-facing.

Belongs to the major facilitator superfamily. TCR/Tet family.

Its subcellular location is the cell inner membrane. The polypeptide is Putative multidrug resistance protein MdtD (Escherichia coli O139:H28 (strain E24377A / ETEC)).